The following is a 298-amino-acid chain: Small ribosomal subunit protein uS2 (298 aa).

A disordered region spans residues 240–298; sequence AGENWDTQAPGAGVPGSAFAAASAAAATSWEADGGDWAASSAPPAGESWAETQPTEAKW. Residues 248 to 271 show a composition bias toward low complexity; that stretch reads APGAGVPGSAFAAASAAAATSWEA. Over residues 289-298 the composition is skewed to polar residues; it reads AETQPTEAKW.

It belongs to the universal ribosomal protein uS2 family. In terms of assembly, component of the small ribosomal subunit. Mature ribosomes consist of a small (40S) and a large (60S) subunit. The 40S subunit contains about 33 different proteins and 1 molecule of RNA (18S). The 60S subunit contains about 49 different proteins and 3 molecules of RNA (25S, 5.8S and 5S). Interacts with rps21.

Its subcellular location is the cytoplasm. Its function is as follows. Required for the assembly and/or stability of the 40S ribosomal subunit. Required for the processing of the 20S rRNA-precursor to mature 18S rRNA in a late step of the maturation of 40S ribosomal subunits. In Aspergillus clavatus (strain ATCC 1007 / CBS 513.65 / DSM 816 / NCTC 3887 / NRRL 1 / QM 1276 / 107), this protein is Small ribosomal subunit protein uS2 (rps0).